A 130-amino-acid polypeptide reads, in one-letter code: Small ribosomal subunit protein uS9 (130 aa).

The protein belongs to the universal ribosomal protein uS9 family.

This chain is Small ribosomal subunit protein uS9, found in Histophilus somni (strain 129Pt) (Haemophilus somnus).